Consider the following 653-residue polypeptide: Mediator of RNA polymerase II transcription subunit 17 (653 aa).

A disordered region spans residues 246-271 (SNESDEHIDSTTGHDIPGTSEKLSAS).

Belongs to the Mediator complex subunit 17 family. Component of the Mediator complex.

It is found in the nucleus. Functionally, component of the Mediator complex, a coactivator involved in the regulated transcription of nearly all RNA polymerase II-dependent genes. Mediator functions as a bridge to convey information from gene-specific regulatory proteins to the basal RNA polymerase II transcription machinery. The Mediator complex, having a compact conformation in its free form, is recruited to promoters by direct interactions with regulatory proteins and serves for the assembly of a functional preinitiation complex with RNA polymerase II and the general transcription factors. In Arabidopsis thaliana (Mouse-ear cress), this protein is Mediator of RNA polymerase II transcription subunit 17 (MED17).